Consider the following 1941-residue polypeptide: Integrin beta-like protein B (1941 aa).

Positions 1-20 (MKNIIKYLFIFLCFLIITEA) are cleaved as a signal peptide. Residues 21–1871 (THFRYGTISW…VTTQNSSNKT (1851 aa)) are Extracellular-facing. One can recognise an EGF-like domain in the interval 420-457 (YGDKCTVLPPCKNGVPNGGVNGDGKCLCNNGWTGSDCS). 2 disulfides stabilise this stretch: Cys430-Cys445 and Cys447-Cys456. The region spanning 513–696 (DVYLLVDANM…AGIKAVSSKL (184 aa)) is the VWFA domain. 10 N-linked (GlcNAc...) asparagine glycosylation sites follow: Asn1400, Asn1505, Asn1530, Asn1606, Asn1652, Asn1738, Asn1777, Asn1848, Asn1866, and Asn1869. A helical membrane pass occupies residues 1872–1892 (VLSGAIAGAAAGTALIAAAMW). Topologically, residues 1893–1941 (KMLRKAAPPTDAFFDEGAFLGDGVNSNPMYQESKNGGENPLYLASNETL) are cytoplasmic. The segment at 1921 to 1941 (MYQESKNGGENPLYLASNETL) is disordered.

Belongs to the SIB family. As to quaternary structure, interacts with talA/talin.

Its subcellular location is the membrane. In terms of biological role, implicated in cellular adhesion. The chain is Integrin beta-like protein B (sibB) from Dictyostelium discoideum (Social amoeba).